Here is a 463-residue protein sequence, read N- to C-terminus: MKEKIGIVDTLEERKPYITRKQEKGQEIPLGCDNNSLAGAISQRACVYSGARVVLNPVTDAVHLVHGPIGCAGYTWDIRGAKSSGIETNRTSFSTDMKEIDVVFGGEKKLSNAIDELVEVYHPPVILVYSTCIVGIIGDDLESVCKTASQKHTIHVTPVKSEGFNGNKSDGYKAACDALKRLIKRPSEDEIKKKAPRVPETIKPKINILGDFNVAGDVWLVNPLFEQMGIEVIVSMTGDSTPKAISRAAEADLNLVQCSGSMTYLPKWMQAEYGIPYLNASFFGIEDISLALRRTADYFGSEEIKKRAEQILETEINRIMPEISRVREKVKGKKAAIYMGGPAKALTLIKGFDELGMEVVIIGTQTGKKEDYEQISYSVRDGTVIVDDANPLELAELLIRQKADLMVAGVKERFIAYKLGIAFCDFNHDRVVEFEGFDGFVNFAREVDASISSPVWKAVRQRI.

This sequence belongs to the NifD/NifK/NifE/NifN family.

It functions in the pathway cofactor biosynthesis; Fe-Mo cofactor biosynthesis. Its function is as follows. This protein may play a role in the biosynthesis of the prosthetic group of nitrogenase (FeMo cofactor). This chain is Nitrogenase iron-molybdenum cofactor biosynthesis protein NifE (nifE2), found in Methanosarcina barkeri.